The chain runs to 160 residues: Large ribosomal subunit protein uL22c (160 aa).

It belongs to the universal ribosomal protein uL22 family. In terms of assembly, part of the 50S ribosomal subunit.

The protein localises to the plastid. The protein resides in the chloroplast. This protein binds specifically to 23S rRNA. Functionally, the globular domain of the protein is located near the polypeptide exit tunnel on the outside of the subunit, while an extended beta-hairpin is found that lines the wall of the exit tunnel in the center of the 70S ribosome. The sequence is that of Large ribosomal subunit protein uL22c (rpl22) from Aethionema cordifolium (Lebanon stonecress).